We begin with the raw amino-acid sequence, 387 residues long: 8-amino-7-oxononanoate synthase (387 aa).

Arg19 contributes to the substrate binding site. 106-107 (GY) lines the pyridoxal 5'-phosphate pocket. A substrate-binding site is contributed by His131. Positions 177, 205, and 236 each coordinate pyridoxal 5'-phosphate. An N6-(pyridoxal phosphate)lysine modification is found at Lys239. Residue Thr353 coordinates substrate.

It belongs to the class-II pyridoxal-phosphate-dependent aminotransferase family. BioF subfamily. In terms of assembly, homodimer. Pyridoxal 5'-phosphate serves as cofactor.

The enzyme catalyses 6-carboxyhexanoyl-[ACP] + L-alanine + H(+) = (8S)-8-amino-7-oxononanoate + holo-[ACP] + CO2. Its pathway is cofactor biosynthesis; biotin biosynthesis. In terms of biological role, catalyzes the decarboxylative condensation of pimeloyl-[acyl-carrier protein] and L-alanine to produce 8-amino-7-oxononanoate (AON), [acyl-carrier protein], and carbon dioxide. This chain is 8-amino-7-oxononanoate synthase, found in Nitrosomonas eutropha (strain DSM 101675 / C91 / Nm57).